Reading from the N-terminus, the 387-residue chain is Phosphoglycerate kinase (387 aa).

Substrate-binding positions include 21 to 23 (DLN), R36, 59 to 62 (HLGR), R113, and R146. ATP is bound by residues K197, E314, and 340–343 (GGDT).

It belongs to the phosphoglycerate kinase family. Monomer.

The protein resides in the cytoplasm. The catalysed reaction is (2R)-3-phosphoglycerate + ATP = (2R)-3-phospho-glyceroyl phosphate + ADP. It participates in carbohydrate degradation; glycolysis; pyruvate from D-glyceraldehyde 3-phosphate: step 2/5. In Alcanivorax borkumensis (strain ATCC 700651 / DSM 11573 / NCIMB 13689 / SK2), this protein is Phosphoglycerate kinase.